The chain runs to 264 residues: 3-methyl-2-oxobutanoate hydroxymethyltransferase (264 aa).

Mg(2+)-binding residues include Asp-44 and Asp-83. 3-methyl-2-oxobutanoate-binding positions include 44–45 (DS), Asp-83, and Lys-112. Glu-114 lines the Mg(2+) pocket. The Proton acceptor role is filled by Glu-181.

Belongs to the PanB family. In terms of assembly, homodecamer; pentamer of dimers. The cofactor is Mg(2+).

It is found in the cytoplasm. It carries out the reaction 3-methyl-2-oxobutanoate + (6R)-5,10-methylene-5,6,7,8-tetrahydrofolate + H2O = 2-dehydropantoate + (6S)-5,6,7,8-tetrahydrofolate. It participates in cofactor biosynthesis; coenzyme A biosynthesis. Catalyzes the reversible reaction in which hydroxymethyl group from 5,10-methylenetetrahydrofolate is transferred onto alpha-ketoisovalerate to form ketopantoate. In Pyrobaculum arsenaticum (strain DSM 13514 / JCM 11321 / PZ6), this protein is 3-methyl-2-oxobutanoate hydroxymethyltransferase.